A 141-amino-acid chain; its full sequence is MLDTQQIKEIIPHRYPFLLVDRITEVEEGKRAKGYKNVTANEEFFNGHFPQYPVMPGVLIVEALAQVGAVAMLIKEENRGRLAFFAGIDNCRFKKQVKPGDQLHLEVEIIRARGTIGRGKGVATVDGEVVCEVELTFALGE.

H48 is a catalytic residue.

This sequence belongs to the thioester dehydratase family. FabZ subfamily.

Its subcellular location is the cytoplasm. The enzyme catalyses a (3R)-hydroxyacyl-[ACP] = a (2E)-enoyl-[ACP] + H2O. Involved in unsaturated fatty acids biosynthesis. Catalyzes the dehydration of short chain beta-hydroxyacyl-ACPs and long chain saturated and unsaturated beta-hydroxyacyl-ACPs. The polypeptide is 3-hydroxyacyl-[acyl-carrier-protein] dehydratase FabZ (Bacillus subtilis (strain 168)).